We begin with the raw amino-acid sequence, 896 residues long: DNA mismatch repair protein MutS (896 aa).

638 to 645 (GPNMSGKS) contributes to the ATP binding site.

The protein belongs to the DNA mismatch repair MutS family.

Functionally, this protein is involved in the repair of mismatches in DNA. It is possible that it carries out the mismatch recognition step. This protein has a weak ATPase activity. This Fusobacterium nucleatum subsp. nucleatum (strain ATCC 25586 / DSM 15643 / BCRC 10681 / CIP 101130 / JCM 8532 / KCTC 2640 / LMG 13131 / VPI 4355) protein is DNA mismatch repair protein MutS.